The chain runs to 203 residues: NAD(P)H dehydrogenase (quinone) (203 aa).

The region spanning 3–194 is the Flavodoxin-like domain; that stretch reads VLIVYYSLYG…DAARFQGRHI (192 aa). Residues 9–14 and 82–84 each bind FMN; these read SLYGHV and TRF. Tyr-11 contacts NAD(+). Trp-102 lines the substrate pocket. FMN contacts are provided by residues 117 to 123 and His-138; that span reads STATQHG.

It belongs to the WrbA family. FMN is required as a cofactor.

It carries out the reaction a quinone + NADH + H(+) = a quinol + NAD(+). The enzyme catalyses a quinone + NADPH + H(+) = a quinol + NADP(+). This is NAD(P)H dehydrogenase (quinone) from Solidesulfovibrio magneticus (strain ATCC 700980 / DSM 13731 / RS-1) (Desulfovibrio magneticus).